A 262-amino-acid chain; its full sequence is VPS74-like protein DDB_G0288371 (262 aa).

The protein belongs to the GOLPH3/VPS74 family.

The protein resides in the golgi apparatus. The protein localises to the golgi stack membrane. Functionally, phosphatidylinositol-4-phosphate-binding protein that links Golgi membranes to the cytoskeleton and may participate in the tensile force required for vesicle budding from the Golgi. Thereby, may play a role in Golgi membrane trafficking. May also bind to the coatomer to regulate Golgi membrane trafficking. May play a role in anterograde transport from the Golgi to the plasma membrane and regulate secretion. May be involved in vacuolar protein sorting. This is VPS74-like protein DDB_G0288371 from Dictyostelium discoideum (Social amoeba).